We begin with the raw amino-acid sequence, 285 residues long: uncharacterized protein (285 aa).

Serine 168 lines the substrate pocket. The active-site Proton acceptor is the tyrosine 181.

It belongs to the short-chain dehydrogenases/reductases (SDR) family.

This is an uncharacterized protein from Haemophilus influenzae (strain ATCC 51907 / DSM 11121 / KW20 / Rd).